Here is a 279-residue protein sequence, read N- to C-terminus: Phosphatidylglycerol--prolipoprotein diacylglyceryl transferase (279 aa).

3 helical membrane passes run 22–42 (WYGIIIACGILLGYFIAQAAL), 52–72 (LIDIIFYSAIVGFIVARIYFV), and 89–109 (IWHGGIAIHGGLIGGLISGII). Residue Arg137 coordinates a 1,2-diacyl-sn-glycero-3-phospho-(1'-sn-glycerol). Transmembrane regions (helical) follow at residues 203-223 (LGETFFGYLIWYSVGRFFVEA) and 235-255 (IRVAQLVSVVLIMISVIFVIY).

Belongs to the Lgt family.

It is found in the cell membrane. The catalysed reaction is L-cysteinyl-[prolipoprotein] + a 1,2-diacyl-sn-glycero-3-phospho-(1'-sn-glycerol) = an S-1,2-diacyl-sn-glyceryl-L-cysteinyl-[prolipoprotein] + sn-glycerol 1-phosphate + H(+). The protein operates within protein modification; lipoprotein biosynthesis (diacylglyceryl transfer). In terms of biological role, catalyzes the transfer of the diacylglyceryl group from phosphatidylglycerol to the sulfhydryl group of the N-terminal cysteine of a prolipoprotein, the first step in the formation of mature lipoproteins. The sequence is that of Phosphatidylglycerol--prolipoprotein diacylglyceryl transferase from Staphylococcus epidermidis (strain ATCC 35984 / DSM 28319 / BCRC 17069 / CCUG 31568 / BM 3577 / RP62A).